The chain runs to 352 residues: Cysteinyl leukotriene receptor 1 (352 aa).

The Extracellular portion of the chain corresponds to Met1 to Thr43. 3 N-linked (GlcNAc...) asparagine glycosylation sites follow: Asn15, Asn19, and Asn26. Residues Met44 to Ile64 traverse the membrane as a helical segment. Residues Lys65–Ala72 are Cytoplasmic-facing. The chain crosses the membrane as a helical span at residues Phe73–Leu93. At Arg94–Asn121 the chain is on the extracellular side. Cys111 and Cys188 are oxidised to a cystine. Residues Leu122 to Phe142 form a helical membrane-spanning segment. Residues Pro143 to Arg156 lie on the Cytoplasmic side of the membrane. Residues Phe157–Lys177 form a helical membrane-spanning segment. Topologically, residues Ser178 to Ser208 are extracellular. A glycan (N-linked (GlcNAc...) asparagine) is linked at Asn184. The chain crosses the membrane as a helical span at residues Leu209 to Leu229. Over Thr230 to Lys245 the chain is Cytoplasmic. The helical transmembrane segment at Ala246–Ile266 threads the bilayer. At Gln267–Ser291 the chain is on the extracellular side. A helical membrane pass occupies residues Val292–Phe312. Over Ser313 to Glu352 the chain is Cytoplasmic.

The protein belongs to the G-protein coupled receptor 1 family. As to expression, widely expressed, with higher expression in the lung and skin, intermediate levels in the heart, kidney and stomach and lower levels in several other tissues. Isoform 1 is the most abundant form in all tested tissues.

It is found in the cell membrane. Functionally, receptor for cysteinyl leukotrienes mediating constriction of the microvascular smooth muscle during an inflammatory response. This response is mediated via a G-protein that activates a phosphatidylinositol-calcium second messenger system. The rank order of affinities for the leukotrienes is LTD4 &gt;&gt; LTE4 = LTC4 &gt;&gt; LTB4. The sequence is that of Cysteinyl leukotriene receptor 1 (Cysltr1) from Mus musculus (Mouse).